Consider the following 236-residue polypeptide: MQKRELIYEGKGKKMYATDDANLLIAEFKDDLTAFDAQKRGNEAGKGALNNKISTQIFKILKEKGIETDLVETISDTEQLVKKCEIIPLEVVVRNIATGSLTKRLAIKEGTVLPFPLVEFYFKNDELHDPLVTDEHCLVMGLVKSEKDLQTLRHLAREINSILFKFFEERKLKLVDFKIEFGMDKDGNILLADEISPDSCRFWDADTNEKLDKDRFRQDLGSVKVAYEEVLRRILS.

The protein belongs to the SAICAR synthetase family.

It carries out the reaction 5-amino-1-(5-phospho-D-ribosyl)imidazole-4-carboxylate + L-aspartate + ATP = (2S)-2-[5-amino-1-(5-phospho-beta-D-ribosyl)imidazole-4-carboxamido]succinate + ADP + phosphate + 2 H(+). Its pathway is purine metabolism; IMP biosynthesis via de novo pathway; 5-amino-1-(5-phospho-D-ribosyl)imidazole-4-carboxamide from 5-amino-1-(5-phospho-D-ribosyl)imidazole-4-carboxylate: step 1/2. This chain is Phosphoribosylaminoimidazole-succinocarboxamide synthase, found in Campylobacter curvus (strain 525.92).